We begin with the raw amino-acid sequence, 132 residues long: uncharacterized protein (132 aa).

This sequence to M.jannaschii MJ0661.

This is an uncharacterized protein from Helicobacter pylori (strain J99 / ATCC 700824) (Campylobacter pylori J99).